We begin with the raw amino-acid sequence, 146 residues long: 3-dehydroquinate dehydratase (146 aa).

Tyr-23 acts as the Proton acceptor in catalysis. Residues Asn-74, His-80, and Asp-87 each contribute to the substrate site. The active-site Proton donor is His-100. Residues 101-102 and Arg-111 contribute to the substrate site; that span reads IS.

This sequence belongs to the type-II 3-dehydroquinase family. In terms of assembly, homododecamer.

It carries out the reaction 3-dehydroquinate = 3-dehydroshikimate + H2O. The protein operates within metabolic intermediate biosynthesis; chorismate biosynthesis; chorismate from D-erythrose 4-phosphate and phosphoenolpyruvate: step 3/7. Functionally, catalyzes a trans-dehydration via an enolate intermediate. This chain is 3-dehydroquinate dehydratase, found in Bacillus mycoides (strain KBAB4) (Bacillus weihenstephanensis).